A 452-amino-acid polypeptide reads, in one-letter code: MSLGNVGINADYSWDAGERARLLQSPSVGTSPELRRLAGGTSPAGAVFIVVNAALGAGLLNFPAAFNAAGGITAAISLQLVLLLFIISGLVILAHCADACSERTYQEVVRGVCGRTAGVLCEVLIAVYTFGTCIAFFIIIGDQLDKLLGAMMHTTAESPVPWYADRKFTISVTGVLLILPLSLPREISVQRYASFLSVLGTCYVTVVVVVRCIWPDTTIPSHEISSSSSSWLAVFNAVPTICFGYQCHVSSVPVYGSMQQQDIRRWGYIVTIAMFIALCVYTGTGVCGFLLFGSDVDQDVLLSFPSDDIAVAVARAFIILCVLTSYPILHYCGRAVLEGLWLRFTSQEPGEEPSKERRRRVLQTVIWFLLTLLLALFIPDIGRVISLIGGLAACFIFIFPGLCLIHLKLSEIHEHKSKSWWALLSYGVIMVTIGTFIFGQTTTKAIFVDLVG.

11 helical membrane-spanning segments follow: residues 46–66, 74–94, 120–140, 168–188, 195–215, 234–256, 272–292, 309–329, 361–381, 385–405, and 419–439; these read AVFI…PAAF, AAIS…VILA, LCEV…FIII, FTIS…REIS, FLSV…CIWP, VFNA…PVYG, IAMF…FLLF, IAVA…YPIL, VLQT…IPDI, ISLI…LCLI, and SWWA…FIFG.

Belongs to the amino acid/polyamine transporter 2 family.

It localises to the lysosome membrane. Its subcellular location is the cell projection. The protein resides in the axon. The catalysed reaction is L-asparagine(in) + Na(+)(in) = L-asparagine(out) + Na(+)(out). It catalyses the reaction L-glutamine(in) + Na(+)(in) = L-glutamine(out) + Na(+)(out). Its function is as follows. Symporter that selectively cotransports sodium ions and amino acids, such as L-glutamine and L-asparagine from the lysosome into the cytoplasm and may participates in mTORC1 activation. The transport activity requires an acidic lysosomal lumen. The chain is Sodium-coupled neutral amino acid transporter 7 from Xenopus laevis (African clawed frog).